The chain runs to 215 residues: 3-demethoxyubiquinol 3-hydroxylase (215 aa).

Fe cation contacts are provided by glutamate 64, glutamate 94, histidine 97, glutamate 146, glutamate 178, and histidine 181.

Belongs to the COQ7 family. It depends on Fe cation as a cofactor.

The protein resides in the cell membrane. It catalyses the reaction a 5-methoxy-2-methyl-3-(all-trans-polyprenyl)benzene-1,4-diol + AH2 + O2 = a 3-demethylubiquinol + A + H2O. Its pathway is cofactor biosynthesis; ubiquinone biosynthesis. In terms of biological role, catalyzes the hydroxylation of 2-nonaprenyl-3-methyl-6-methoxy-1,4-benzoquinol during ubiquinone biosynthesis. This is 3-demethoxyubiquinol 3-hydroxylase from Stutzerimonas stutzeri (strain A1501) (Pseudomonas stutzeri).